The sequence spans 156 residues: Small ribosomal subunit protein uS7 (156 aa).

It belongs to the universal ribosomal protein uS7 family. Part of the 30S ribosomal subunit. Contacts proteins S9 and S11.

One of the primary rRNA binding proteins, it binds directly to 16S rRNA where it nucleates assembly of the head domain of the 30S subunit. Is located at the subunit interface close to the decoding center, probably blocks exit of the E-site tRNA. In Streptococcus pneumoniae serotype 4 (strain ATCC BAA-334 / TIGR4), this protein is Small ribosomal subunit protein uS7.